The sequence spans 319 residues: N-acetyllactosaminide alpha-1,3-galactosyltransferase-like 1 (319 aa).

Over 1–6 (MQYKKE) the chain is Cytoplasmic. Residues 7–26 (ALLLMLFAVLLALTQRFSYS) form a helical; Signal-anchor for type II membrane protein membrane-spanning segment. The Lumenal segment spans residues 27–319 (RTKDHLQKMY…IKHIKIAWKP (293 aa)). N89 and N101 each carry an N-linked (GlcNAc...) asparagine glycan. Substrate contacts are provided by residues 97-102 (FATGNF), 188-190 (AVN), and 210-213 (HAWW). The Nucleophile role is filled by E278.

The protein belongs to the glycosyltransferase 6 family. The cofactor is Mn(2+).

The protein resides in the golgi apparatus. It is found in the golgi stack membrane. The enzyme catalyses a beta-D-galactosyl-(1-&gt;4)-N-acetyl-beta-D-glucosaminyl derivative + UDP-alpha-D-galactose = an alpha-D-galactosyl-(1-&gt;3)-beta-D-galactosyl-(1-&gt;4)-N-acetyl-beta-D-glucosaminyl derivative + UDP + H(+). Its pathway is protein modification; protein glycosylation. Its function is as follows. Synthesizes the galactose-alpha(1,3)-galactose group by catalyzing the transfer of a galactose residue, with an alpha-1,3 linkage, on terminal lactosaminide (Gal-beta-1,4-GlcNAc-R) disaccharide borne by a glycoprotein or a glycolipid. The protein is N-acetyllactosaminide alpha-1,3-galactosyltransferase-like 1 (Ggta1l1) of Mus musculus (Mouse).